A 260-amino-acid chain; its full sequence is Proteasome subunit alpha (260 aa).

This sequence belongs to the peptidase T1A family. In terms of assembly, the 20S proteasome core is composed of 14 alpha and 14 beta subunits that assemble into four stacked heptameric rings, resulting in a barrel-shaped structure. The two inner rings, each composed of seven catalytic beta subunits, are sandwiched by two outer rings, each composed of seven alpha subunits. The catalytic chamber with the active sites is on the inside of the barrel. Has a gated structure, the ends of the cylinder being occluded by the N-termini of the alpha-subunits. Is capped at one or both ends by the proteasome regulatory ATPase, PAN.

The protein localises to the cytoplasm. The formation of the proteasomal ATPase PAN-20S proteasome complex, via the docking of the C-termini of PAN into the intersubunit pockets in the alpha-rings, triggers opening of the gate for substrate entry. Interconversion between the open-gate and close-gate conformations leads to a dynamic regulation of the 20S proteasome proteolysis activity. Component of the proteasome core, a large protease complex with broad specificity involved in protein degradation. The chain is Proteasome subunit alpha from Thermococcus onnurineus (strain NA1).